The following is a 308-amino-acid chain: Aspartate carbamoyltransferase catalytic subunit (308 aa).

Carbamoyl phosphate contacts are provided by arginine 58 and threonine 59. Residue lysine 86 coordinates L-aspartate. Carbamoyl phosphate is bound by residues arginine 108, histidine 136, and glutamine 139. L-aspartate is bound by residues arginine 169 and arginine 227. 2 residues coordinate carbamoyl phosphate: glycine 268 and proline 269.

Belongs to the aspartate/ornithine carbamoyltransferase superfamily. ATCase family. In terms of assembly, heterododecamer (2C3:3R2) of six catalytic PyrB chains organized as two trimers (C3), and six regulatory PyrI chains organized as three dimers (R2).

The catalysed reaction is carbamoyl phosphate + L-aspartate = N-carbamoyl-L-aspartate + phosphate + H(+). It participates in pyrimidine metabolism; UMP biosynthesis via de novo pathway; (S)-dihydroorotate from bicarbonate: step 2/3. Functionally, catalyzes the condensation of carbamoyl phosphate and aspartate to form carbamoyl aspartate and inorganic phosphate, the committed step in the de novo pyrimidine nucleotide biosynthesis pathway. The sequence is that of Aspartate carbamoyltransferase catalytic subunit from Chloroflexus aurantiacus (strain ATCC 29366 / DSM 635 / J-10-fl).